Here is a 201-residue protein sequence, read N- to C-terminus: dCTP deaminase, dUMP-forming (201 aa).

Residues 101–106 (KSSLGR), D119, 127–129 (TLE), Q148, Y162, and Q174 contribute to the dCTP site. E129 acts as the Proton donor/acceptor in catalysis.

The protein belongs to the dCTP deaminase family. In terms of assembly, homotrimer.

The enzyme catalyses dCTP + 2 H2O = dUMP + NH4(+) + diphosphate. The protein operates within pyrimidine metabolism; dUMP biosynthesis; dUMP from dCTP: step 1/1. Functionally, bifunctional enzyme that catalyzes both the deamination of dCTP to dUTP and the hydrolysis of dUTP to dUMP without releasing the toxic dUTP intermediate. The polypeptide is dCTP deaminase, dUMP-forming (Parafrankia sp. (strain EAN1pec)).